Here is a 317-residue protein sequence, read N- to C-terminus: tRNA dimethylallyltransferase (317 aa).

An ATP-binding site is contributed by 14–21 (GPTAVGKT). Position 16-21 (16-21 (TAVGKT)) interacts with substrate. The segment at 39–42 (DSMQ) is interaction with substrate tRNA.

The protein belongs to the IPP transferase family. In terms of assembly, monomer. It depends on Mg(2+) as a cofactor.

The enzyme catalyses adenosine(37) in tRNA + dimethylallyl diphosphate = N(6)-dimethylallyladenosine(37) in tRNA + diphosphate. Its function is as follows. Catalyzes the transfer of a dimethylallyl group onto the adenine at position 37 in tRNAs that read codons beginning with uridine, leading to the formation of N6-(dimethylallyl)adenosine (i(6)A). The chain is tRNA dimethylallyltransferase from Bacillus cereus (strain ATCC 14579 / DSM 31 / CCUG 7414 / JCM 2152 / NBRC 15305 / NCIMB 9373 / NCTC 2599 / NRRL B-3711).